The primary structure comprises 58 residues: Large ribosomal subunit protein uL30 (58 aa).

Belongs to the universal ribosomal protein uL30 family. In terms of assembly, part of the 50S ribosomal subunit.

The polypeptide is Large ribosomal subunit protein uL30 (Pseudomonas putida (strain ATCC 700007 / DSM 6899 / JCM 31910 / BCRC 17059 / LMG 24140 / F1)).